The following is a 375-amino-acid chain: MSCPVIELAQQLIRRPSLSPDDAGCQALMIERLRAIGFTVEPMDFGDTQNFWAWRGHGETLAFAGHTDVVPAGDADRWINPPFEPTIRDGMLFGRGAADMKGSLAAMVVAAERFVAQYPNHRGRLAFLITSDEEASAKNGTVKVVETLMARNERLDYCLVGEPSSTEVVGDVVKNGRRGSLTCNLTIHGVQGHVAYPHLADNPVHRAAPMLAELVNIEWDKGNEFFPPTSMQIANVQSGTGSNNVIPGDMFVQFNFRFSTELTDEMIKARVVSLLEKYQLRYSVEWWLSGQPFLTGRGKLVDAVVSAIEHYNEIKPQLLTNGGTSDGRFIARMGAQVVELGPVNATIHKINECVNAADLQLLARMYQRVMEQLVA.

Histidine 66 is a binding site for Zn(2+). Aspartate 68 is a catalytic residue. Aspartate 99 is a binding site for Zn(2+). Glutamate 133 acts as the Proton acceptor in catalysis. Residues glutamate 134, glutamate 162, and histidine 348 each contribute to the Zn(2+) site.

It belongs to the peptidase M20A family. DapE subfamily. In terms of assembly, homodimer. Requires Zn(2+) as cofactor. The cofactor is Co(2+).

It catalyses the reaction N-succinyl-(2S,6S)-2,6-diaminopimelate + H2O = (2S,6S)-2,6-diaminopimelate + succinate. It functions in the pathway amino-acid biosynthesis; L-lysine biosynthesis via DAP pathway; LL-2,6-diaminopimelate from (S)-tetrahydrodipicolinate (succinylase route): step 3/3. Functionally, catalyzes the hydrolysis of N-succinyl-L,L-diaminopimelic acid (SDAP), forming succinate and LL-2,6-diaminopimelate (DAP), an intermediate involved in the bacterial biosynthesis of lysine and meso-diaminopimelic acid, an essential component of bacterial cell walls. In Klebsiella pneumoniae (strain 342), this protein is Succinyl-diaminopimelate desuccinylase.